Consider the following 524-residue polypeptide: GMP synthase [glutamine-hydrolyzing] (524 aa).

The Glutamine amidotransferase type-1 domain occupies 12–201 (TILVLDFGSQ…AVDICKASQS (190 aa)). Catalysis depends on Cys-88, which acts as the Nucleophile. Catalysis depends on residues His-175 and Glu-177. The GMPS ATP-PPase domain occupies 202–399 (WNMENFIDTE…LGISHELVWR (198 aa)). 230-236 (SGGVDST) contributes to the ATP binding site. XMP is bound by residues Arg-303, Asp-461, Lys-516, and Glu-522.

As to quaternary structure, homodimer. It depends on Mg(2+) as a cofactor.

The protein resides in the cytoplasm. It localises to the cytosol. It carries out the reaction XMP + L-glutamine + ATP + H2O = GMP + L-glutamate + AMP + diphosphate + 2 H(+). It participates in purine metabolism; GMP biosynthesis; GMP from XMP (L-Gln route): step 1/1. Functionally, catalyzes the conversion of xanthine monophosphate (XMP) to GMP in the presence of glutamine and ATP through an adenyl-XMP intermediate. The polypeptide is GMP synthase [glutamine-hydrolyzing] (GUA1) (Kluyveromyces lactis (strain ATCC 8585 / CBS 2359 / DSM 70799 / NBRC 1267 / NRRL Y-1140 / WM37) (Yeast)).